Consider the following 557-residue polypeptide: Multidrug transporter FLR1 (557 aa).

Asn33, Asn48, and Asn106 each carry an N-linked (GlcNAc...) asparagine glycan. Over residues 44–57 the composition is skewed to low complexity; sequence SESSNMSFNSGSEE. The segment at 44-67 is disordered; it reads SESSNMSFNSGSEENSQEKSVEDL. 8 consecutive transmembrane segments (helical) span residues 113 to 133, 149 to 169, 181 to 201, 204 to 224, 238 to 258, 271 to 291, 355 to 375, and 387 to 407; these read ALII…SSIY, VVGT…PIVF, LPVY…CALA, FAGL…ALST, LALV…LAPL, WIFW…TFFF, LYIA…PIVF, and GLAY…LLVF. Residue Asn418 is glycosylated (N-linked (GlcNAc...) asparagine). The next 4 helical transmembrane spans lie at 426 to 446, 450 to 470, 484 to 506, and 521 to 541; these read TLIL…MFGW, VHWI…FNIF, YVAS…FPLF, and VAWG…IPFV.

This sequence belongs to the major facilitator superfamily.

It is found in the cell membrane. Its function is as follows. Multidrug transporter that confers resistance to 5-flucytosine (5-FC) and clotrimazole. Also confers resistance to benomyl, but not 4-nitroquinoline-N-oxide, cycloheximide, or fluconazole. Plays direct roles in extrusion of 5-flucytosine and clotrimazole. The polypeptide is Multidrug transporter FLR1 (Candida glabrata (strain ATCC 2001 / BCRC 20586 / JCM 3761 / NBRC 0622 / NRRL Y-65 / CBS 138) (Yeast)).